Reading from the N-terminus, the 145-residue chain is uncharacterized protein (145 aa).

Helical transmembrane passes span leucine 20–phenylalanine 40 and methionine 116–alanine 136.

It localises to the membrane. This is an uncharacterized protein from Saccharomyces cerevisiae (strain ATCC 204508 / S288c) (Baker's yeast).